Reading from the N-terminus, the 344-residue chain is GTP 3',8-cyclase (344 aa).

The 221-residue stretch at 19–239 (PFGRTIDYLR…ANYTLTDLPD (221 aa)) folds into the Radical SAM core domain. GTP is bound at residue Arg-28. 2 residues coordinate [4Fe-4S] cluster: Cys-35 and Cys-39. An S-adenosyl-L-methionine-binding site is contributed by Tyr-41. Cys-42 contacts [4Fe-4S] cluster. Arg-77 contacts GTP. An S-adenosyl-L-methionine-binding site is contributed by Gly-81. Residue Thr-111 participates in GTP binding. Ser-135 contributes to the S-adenosyl-L-methionine binding site. Lys-171 contacts GTP. Residue Met-205 coordinates S-adenosyl-L-methionine. [4Fe-4S] cluster-binding residues include Cys-268 and Cys-271. 273-275 (RVR) lines the GTP pocket. [4Fe-4S] cluster is bound at residue Cys-285.

This sequence belongs to the radical SAM superfamily. MoaA family. Monomer and homodimer. It depends on [4Fe-4S] cluster as a cofactor.

The enzyme catalyses GTP + AH2 + S-adenosyl-L-methionine = (8S)-3',8-cyclo-7,8-dihydroguanosine 5'-triphosphate + 5'-deoxyadenosine + L-methionine + A + H(+). The protein operates within cofactor biosynthesis; molybdopterin biosynthesis. Functionally, catalyzes the cyclization of GTP to (8S)-3',8-cyclo-7,8-dihydroguanosine 5'-triphosphate. This is GTP 3',8-cyclase from Rhodopseudomonas palustris (strain ATCC BAA-98 / CGA009).